The primary structure comprises 378 residues: Putative monoglyceride lipase (378 aa).

Residues 97–101 (GHSMG) carry the GXSXG motif. Ser99 serves as the catalytic Nucleophile. Catalysis depends on charge relay system residues Asp219 and His249. Positions 276 to 292 (PSETVKSEQETAVEHPK) are enriched in basic and acidic residues. The tract at residues 276-350 (PSETVKSEQE…TSESTTVPET (75 aa)) is disordered. Positions 293–305 (PTATTSAPSASPT) are enriched in low complexity. Ser301 is modified (phosphoserine). The span at 341-350 (TSESTTVPET) shows a compositional bias: polar residues.

It belongs to the AB hydrolase superfamily. Monoacylglycerol lipase family.

The protein localises to the lipid droplet. It localises to the cytoplasm. It is found in the endoplasmic reticulum. Its subcellular location is the mitochondrion outer membrane. The enzyme catalyses Hydrolyzes glycerol monoesters of long-chain fatty acids.. It participates in glycerolipid metabolism; triacylglycerol degradation. Functionally, converts monoacylglycerides (MAG) to free fatty acids and glycerol. Has a strong preference for monounsaturated monoglycerides. Required for efficient degradation of MAG, short-lived intermediates of glycerolipid metabolism which may also function as lipid signaling molecules. Controls inactivation of the signaling lipid N-palmitoylethanolamine (PEA). Involved in fatty acid ethyl ester (FAEE) catabolism. FAEEs are non-oxidative metabolites of ethanol that are transiently incorporated into lipid droplets (LDs). Their mobilization by LD-resident FAEE hydrolases facilitates a controlled metabolism of these potentially toxic lipid metabolites. The polypeptide is Putative monoglyceride lipase (mgl1) (Schizosaccharomyces pombe (strain 972 / ATCC 24843) (Fission yeast)).